We begin with the raw amino-acid sequence, 129 residues long: Ribosome-binding factor A (129 aa).

It belongs to the RbfA family. As to quaternary structure, monomer. Binds 30S ribosomal subunits, but not 50S ribosomal subunits or 70S ribosomes.

The protein localises to the cytoplasm. Its function is as follows. One of several proteins that assist in the late maturation steps of the functional core of the 30S ribosomal subunit. Associates with free 30S ribosomal subunits (but not with 30S subunits that are part of 70S ribosomes or polysomes). Required for efficient processing of 16S rRNA. May interact with the 5'-terminal helix region of 16S rRNA. The polypeptide is Ribosome-binding factor A (Thermomicrobium roseum (strain ATCC 27502 / DSM 5159 / P-2)).